Reading from the N-terminus, the 339-residue chain is GTPase Obg (339 aa).

Residues 1 to 159 form the Obg domain; it reads MKFVDEAFVR…RELKLELKLL (159 aa). A disordered region spans residues 127-147; that stretch reads NTHFKSSTNRAPRRTTSGEEG. The OBG-type G domain occupies 160 to 333; it reads ADVGLLGLPN…LCYDLMSFLE (174 aa). GTP-binding positions include 166 to 173, 191 to 195, 213 to 216, 283 to 286, and 314 to 316; these read GLPNAGKS, FTTLY, DIPG, NKID, and SAI. Mg(2+) is bound by residues Ser-173 and Thr-193.

Belongs to the TRAFAC class OBG-HflX-like GTPase superfamily. OBG GTPase family. As to quaternary structure, monomer. Requires Mg(2+) as cofactor.

The protein localises to the cytoplasm. Its function is as follows. An essential GTPase which binds GTP, GDP and possibly (p)ppGpp with moderate affinity, with high nucleotide exchange rates and a fairly low GTP hydrolysis rate. Plays a role in control of the cell cycle, stress response, ribosome biogenesis and in those bacteria that undergo differentiation, in morphogenesis control. The protein is GTPase Obg of Coxiella burnetii (strain CbuK_Q154) (Coxiella burnetii (strain Q154)).